The sequence spans 147 residues: Large ribosomal subunit protein uL11 (147 aa).

This sequence belongs to the universal ribosomal protein uL11 family. As to quaternary structure, part of the ribosomal stalk of the 50S ribosomal subunit. Interacts with L10 and the large rRNA to form the base of the stalk. L10 forms an elongated spine to which L12 dimers bind in a sequential fashion forming a multimeric L10(L12)X complex. In terms of processing, one or more lysine residues are methylated.

In terms of biological role, forms part of the ribosomal stalk which helps the ribosome interact with GTP-bound translation factors. The sequence is that of Large ribosomal subunit protein uL11 from Sorangium cellulosum (strain So ce56) (Polyangium cellulosum (strain So ce56)).